The sequence spans 189 residues: UPF0301 protein PP_4995 (189 aa).

It belongs to the UPF0301 (AlgH) family.

This Pseudomonas putida (strain ATCC 47054 / DSM 6125 / CFBP 8728 / NCIMB 11950 / KT2440) protein is UPF0301 protein PP_4995.